A 419-amino-acid polypeptide reads, in one-letter code: E3 ubiquitin-protein ligase RNF130 (419 aa).

Positions 1 to 27 are cleaved as a signal peptide; that stretch reads MSGAARAGPARLAALALLTCSLWPTRA. Over 28 to 194 the chain is Extracellular; sequence DNASQEYYTA…MPPKNFSRGS (167 aa). N-linked (GlcNAc...) asparagine glycans are attached at residues asparagine 29, asparagine 40, asparagine 112, asparagine 135, asparagine 172, and asparagine 189. The 72-residue stretch at 105–176 folds into the PA domain; sequence IALLQRGNCT…SYLEKNISVQ (72 aa). Residues 195 to 217 form a helical membrane-spanning segment; sequence LVFVSISFIVLMIISSAWLIFYF. Topologically, residues 218-419 are cytoplasmic; it reads IQKIRYTNAR…SLNANEVEWF (202 aa). Residues 264-305 form an RING-type zinc finger; the sequence is CAVCIESYKQNDVVRVLPCKHVFHKSCVDPWLSEHCTCPMCK.

Expression is highest in liver, with lesser amounts in the lung, spleen, brain, heart, kidney and testis.

The protein resides in the membrane. The protein localises to the cytoplasm. The enzyme catalyses S-ubiquitinyl-[E2 ubiquitin-conjugating enzyme]-L-cysteine + [acceptor protein]-L-lysine = [E2 ubiquitin-conjugating enzyme]-L-cysteine + N(6)-ubiquitinyl-[acceptor protein]-L-lysine.. Its pathway is protein modification; protein ubiquitination. Its function is as follows. Acts as an E3 ubiquitin-protein ligase. May have a role during the programmed cell death of hematopoietic cells. This Mus musculus (Mouse) protein is E3 ubiquitin-protein ligase RNF130.